We begin with the raw amino-acid sequence, 82 residues long: Conotoxin Gla-TxX (82 aa).

The signal sequence occupies residues 1–25 (MSGHTSVSFLLLSIVALGMVATVIC). A 4-carboxyglutamate mark is found at E30, E34, E37, E40, and E41. N72 is modified (asparagine amide). Residues 77 to 82 (LIHMQK) constitute a propeptide that is removed on maturation.

Contains 4 disulfide bonds. As to expression, expressed by the venom duct.

The protein localises to the secreted. In Conus textile (Cloth-of-gold cone), this protein is Conotoxin Gla-TxX.